Reading from the N-terminus, the 697-residue chain is Elongation factor G 1 (697 aa).

The 276-residue stretch at 8–283 (ERYRNFGIMA…AVVDFLPSPV (276 aa)) folds into the tr-type G domain. Residues 17 to 24 (AHIDAGKT), 81 to 85 (DTPGH), and 135 to 138 (NKMD) each bind GTP.

This sequence belongs to the TRAFAC class translation factor GTPase superfamily. Classic translation factor GTPase family. EF-G/EF-2 subfamily.

The protein localises to the cytoplasm. Its function is as follows. Catalyzes the GTP-dependent ribosomal translocation step during translation elongation. During this step, the ribosome changes from the pre-translocational (PRE) to the post-translocational (POST) state as the newly formed A-site-bound peptidyl-tRNA and P-site-bound deacylated tRNA move to the P and E sites, respectively. Catalyzes the coordinated movement of the two tRNA molecules, the mRNA and conformational changes in the ribosome. In Anaeromyxobacter dehalogenans (strain 2CP-C), this protein is Elongation factor G 1.